The sequence spans 144 residues: Leghemoglobin-1 (144 aa).

One can recognise a Globin domain in the interval 2-144; sequence GFTEKQEALV…DGLATAIKAA (143 aa). 2 positions are modified to nitrated tyrosine: Tyr-25 and Tyr-30. Ser-45 contributes to the heme b binding site. At Ser-45 the chain carries Phosphoserine. An O2-binding site is contributed by His-62. Lys-65, His-93, and Lys-96 together coordinate heme b. Tyr-134 carries the post-translational modification Nitrated tyrosine.

The protein belongs to the plant globin family. As to quaternary structure, monomer. In terms of processing, nitrated in effective nodules and particularly in hypoxic conditions; this mechanism may play a protective role in the symbiosis by buffering toxic peroxynitrite NO(2)(-). Nitration level decrease during nodule senescence. Post-translationally, phosphorylation at Ser-45 disrupts the molecular environment of its porphyrin ring oxygen binding pocket, thus leading to a reduced oxygen consumption and to the delivery of oxygen O(2) to symbiosomes. As to expression, root nodules.

It localises to the cytoplasm. The protein localises to the cytosol. The protein resides in the nucleus. In terms of biological role, leghemoglobin that reversibly binds oxygen O(2) through a pentacoordinated heme iron. In root nodules, facilitates the diffusion of oxygen to the bacteroids while preventing the bacterial nitrogenase from being inactivated by buffering dioxygen, nitric oxide and carbon monoxide, and promoting the formation of reactive oxygen species (ROS, e.g. H(2)O(2)). This role is essential for symbiotic nitrogen fixation (SNF). The chain is Leghemoglobin-1 from Vicia faba (Broad bean).